The primary structure comprises 61 residues: Large ribosomal subunit protein bL32 (61 aa).

Basic residues predominate over residues 1–16 (MAVPKRKTSPSKRGMR). The segment at 1–40 (MAVPKRKTSPSKRGMRRSADALKAPTYIEDKNSGELRRPH) is disordered. Over residues 28–40 (IEDKNSGELRRPH) the composition is skewed to basic and acidic residues.

Belongs to the bacterial ribosomal protein bL32 family.

In Sinorhizobium medicae (strain WSM419) (Ensifer medicae), this protein is Large ribosomal subunit protein bL32.